We begin with the raw amino-acid sequence, 334 residues long: Glycerol-3-phosphate dehydrogenase [NAD(P)+] (334 aa).

The NADPH site is built by Trp-13, Arg-33, and Lys-106. Lys-106, Gly-137, and Ser-139 together coordinate sn-glycerol 3-phosphate. An NADPH-binding site is contributed by Ala-141. 5 residues coordinate sn-glycerol 3-phosphate: Lys-192, Asp-245, Ser-255, Arg-256, and Asn-257. The Proton acceptor role is filled by Lys-192. Arg-256 is a binding site for NADPH. The NADPH site is built by Val-280 and Glu-282.

The protein belongs to the NAD-dependent glycerol-3-phosphate dehydrogenase family.

Its subcellular location is the cytoplasm. It carries out the reaction sn-glycerol 3-phosphate + NAD(+) = dihydroxyacetone phosphate + NADH + H(+). The catalysed reaction is sn-glycerol 3-phosphate + NADP(+) = dihydroxyacetone phosphate + NADPH + H(+). It participates in membrane lipid metabolism; glycerophospholipid metabolism. In terms of biological role, catalyzes the reduction of the glycolytic intermediate dihydroxyacetone phosphate (DHAP) to sn-glycerol 3-phosphate (G3P), the key precursor for phospholipid synthesis. The protein is Glycerol-3-phosphate dehydrogenase [NAD(P)+] of Chlamydia muridarum (strain MoPn / Nigg).